The following is a 432-amino-acid chain: Trigger factor (432 aa).

In terms of domain architecture, PPIase FKBP-type spans 161-246; the sequence is DDRVTIDFVG…LKKIENMVLP (86 aa).

The protein belongs to the FKBP-type PPIase family. Tig subfamily.

It localises to the cytoplasm. It carries out the reaction [protein]-peptidylproline (omega=180) = [protein]-peptidylproline (omega=0). Involved in protein export. Acts as a chaperone by maintaining the newly synthesized protein in an open conformation. Functions as a peptidyl-prolyl cis-trans isomerase. The protein is Trigger factor of Haemophilus influenzae (strain PittEE).